The chain runs to 366 residues: tRNA(Met) cytidine acetate ligase (366 aa).

Residues Ile7–Leu20, Gly101, Asn145, and Arg170 contribute to the ATP site.

Belongs to the TmcAL family.

It localises to the cytoplasm. It catalyses the reaction cytidine(34) in elongator tRNA(Met) + acetate + ATP = N(4)-acetylcytidine(34) in elongator tRNA(Met) + AMP + diphosphate. Its function is as follows. Catalyzes the formation of N(4)-acetylcytidine (ac(4)C) at the wobble position of elongator tRNA(Met), using acetate and ATP as substrates. First activates an acetate ion to form acetyladenylate (Ac-AMP) and then transfers the acetyl group to tRNA to form ac(4)C34. The chain is tRNA(Met) cytidine acetate ligase from Pediococcus pentosaceus (strain ATCC 25745 / CCUG 21536 / LMG 10740 / 183-1w).